A 1091-amino-acid polypeptide reads, in one-letter code: ATPase family AAA domain-containing protein 2 (1091 aa).

Residues 32–211 are disordered; sequence LEDLGVFNET…HFERRRKRSR (180 aa). Residues 53–62 show a composition bias toward basic and acidic residues; that stretch reads KQKDIQRTDE. Residues 74–119 are compositionally biased toward acidic residues; it reads SSEEGEDQEHEDDGEDEDDEDEDDDDDDDDDDDDDEDDEDEEDGEE. A Glycyl lysine isopeptide (Lys-Gly) (interchain with G-Cter in SUMO2) cross-link involves residue lysine 148. 4 positions are modified to phosphoserine: serine 158, serine 168, serine 173, and serine 241. 298-305 is a binding site for ATP; the sequence is GPPGTGKT. 2 positions are modified to phosphoserine: serine 577 and serine 582. Coiled coils occupy residues 801–825 and 917–943; these read LTAE…IFLR and YAII…KKRG. The 113-residue stretch at 811–923 folds into the Bromo domain; the sequence is EQEEDTFREL…DTAYAIIKEE (113 aa). Lysine 959 participates in a covalent cross-link: Glycyl lysine isopeptide (Lys-Gly) (interchain with G-Cter in SUMO2). Residues 961–985 form a disordered region; the sequence is NSTLVGDKRSDPEQNEKLKTPSTPV. Positions 966 to 979 are enriched in basic and acidic residues; the sequence is GDKRSDPEQNEKLK. Phosphoserine is present on serine 970. A Glycyl lysine isopeptide (Lys-Gly) (interchain with G-Cter in SUMO2) cross-link involves residue lysine 979. Threonine 980 and threonine 983 each carry phosphothreonine. Serine 1003 is subject to Phosphoserine. Position 1024 is a phosphothreonine (threonine 1024).

The protein belongs to the AAA ATPase family. In terms of assembly, interaction with ESR1 and NCOA3 is enhanced by estradiol. Interacts with acetylated lysine residues on histone H1.4, H2A, H2B and H3 (in vitro).

The protein resides in the nucleus. The catalysed reaction is ATP + H2O = ADP + phosphate + H(+). Functionally, may be a transcriptional coactivator of the nuclear receptor ESR1 required to induce the expression of a subset of estradiol target genes, such as CCND1, MYC and E2F1. May play a role in the recruitment or occupancy of CREBBP at some ESR1 target gene promoters. May be required for histone hyperacetylation. The chain is ATPase family AAA domain-containing protein 2 (ATAD2) from Pongo abelii (Sumatran orangutan).